A 1380-amino-acid chain; its full sequence is MVQQTFTGRKRVRKFFGHIREVAEMPNLIEVQKASYDQFLMVDEPEGGRLDEGLQAVFKSVFPINDFSGTSQLEFVRYEFEAPKYDVDECRQRGMTYAAPLKVTLRLIVFDIDEETAAKSVKDIKEQDVYMGDIPLMTMNGTFVVNGTERVIVSQMHRSPGVFFDHDKGKTHSSGKLLFAARVIPYRGSWLDIEFDAKDIVFARIDRRRKIPVTSLMFALGLDGEEILSTFYKKIIYKRAKSGSNADGWRVPYDPVRFRGYSTLNDLIDADSGKVVLEAGKKLTVRAARQLQEKGLKALRMSDEELVGMYLAEDLVNPKTGEIYAEAGEEITEKSLKALNEHGYKELPLLDIDHVNVGPYIRNTLSADKNLTREDALFDIYRVMRPGEPPTLESAQNMFQSLFFDSERYDLSAVGRVKMNMRLDLDAPDTYRTLRKEDILAVIKTLVDLRDGKGEIDDIDHLGNRRVRSVGELMENQYRVGLLRMERAIKERMSSVDIDTVMPQDLINAKPAAAAVREFFGSSQLSQFMDQTNPLSEITHKRRLSALGPGGLTRERAGFEVRDVHPTHYGRICPIETPEGPNIGLINSLATFARVNKYGFVETPYRKVKDGRVTDEVVYLSAMEEGRYHVAQANLPLDNRGRFTEDLVVCRHAGEVLPVTSDKVDFMDVSPKQLVSVAAALIPFLENDDANRALMGSNMQRQAVPLVRAEAPFVGTGMEGVVARDSGAAIAARRSGIIDQIDATRVVIRATEDLDPTKSGVDIYRLMKYQRSNQSTCINQRPLVKVGDVVKKGDIIADGPSTDLGELALGRNVLVAFMPWNGYNFEDSILLSERIVKEDVFTSIHIEEFEVMARDTKLGPEEITRDIPNVSEEALKNLDEAGIVYIGAEVRAGDILVGKITPKGESPMTPEEKLLRAIFGEKASDVRDTSLRVPPGVQGTIVEVRVFNRHGVDKDERALAIEREEIERLAKDRDDEQAILDRNVYGRLADLLENRQGIAGPKGFKKDTKITRSVIEEYPKSQWWLFASPNDKLMAEIEAMRKQYDESKKGLEQRFLDKVEKLQRGDELPPGVMKMVKVFVAVKRKIQPGDKMAGRHGNKGVVSKIVPIEDMPFLEDGTHADIVLNPLGVPSRMNVGQILETHLGWACAGLGRRIGQAVDAYLASAKQETKPLKETLKKVYGDNETIKSLNDHELVELGRNLSRGVPIATPVFDGAKEADIEQMLELAGMDKSGQSTVYDGRTGDTFDRKVTVGYIYMLKLHHLVDDKIHARSIGPYSLVTQQPLGGKAQFGGQRFGEMEVWALEAYGAAYTLQEMLTVKSDDVAGRTKVYEAIVRGDDTFEAGIPESFNVLVKEMRSLGLNVDLHNSKIGSATPTSEAAE.

The protein belongs to the RNA polymerase beta chain family. The RNAP catalytic core consists of 2 alpha, 1 beta, 1 beta' and 1 omega subunit. When a sigma factor is associated with the core the holoenzyme is formed, which can initiate transcription.

It catalyses the reaction RNA(n) + a ribonucleoside 5'-triphosphate = RNA(n+1) + diphosphate. Its function is as follows. DNA-dependent RNA polymerase catalyzes the transcription of DNA into RNA using the four ribonucleoside triphosphates as substrates. The protein is DNA-directed RNA polymerase subunit beta of Nitrobacter hamburgensis (strain DSM 10229 / NCIMB 13809 / X14).